The following is a 384-amino-acid chain: 8-amino-7-oxononanoate synthase (384 aa).

Arg21 provides a ligand contact to substrate. A pyridoxal 5'-phosphate-binding site is contributed by 108 to 109 (GF). A substrate-binding site is contributed by His133. The pyridoxal 5'-phosphate site is built by Ser179, His207, and Thr233. Residue Lys236 is modified to N6-(pyridoxal phosphate)lysine. Residue Thr352 coordinates substrate.

This sequence belongs to the class-II pyridoxal-phosphate-dependent aminotransferase family. BioF subfamily. As to quaternary structure, homodimer. Pyridoxal 5'-phosphate is required as a cofactor.

It carries out the reaction 6-carboxyhexanoyl-[ACP] + L-alanine + H(+) = (8S)-8-amino-7-oxononanoate + holo-[ACP] + CO2. It participates in cofactor biosynthesis; biotin biosynthesis. Its function is as follows. Catalyzes the decarboxylative condensation of pimeloyl-[acyl-carrier protein] and L-alanine to produce 8-amino-7-oxononanoate (AON), [acyl-carrier protein], and carbon dioxide. This chain is 8-amino-7-oxononanoate synthase, found in Escherichia coli O6:K15:H31 (strain 536 / UPEC).